The following is a 102-amino-acid chain: NADH-quinone oxidoreductase subunit K (102 aa).

A run of 3 helical transmembrane segments spans residues 6-26 (LIGI…GVLA), 30-50 (MLFQ…GFIA), and 63-83 (MFIL…ALFL).

The protein belongs to the complex I subunit 4L family. As to quaternary structure, NDH-1 is composed of 14 different subunits. Subunits NuoA, H, J, K, L, M, N constitute the membrane sector of the complex.

The protein resides in the cell inner membrane. It carries out the reaction a quinone + NADH + 5 H(+)(in) = a quinol + NAD(+) + 4 H(+)(out). Its function is as follows. NDH-1 shuttles electrons from NADH, via FMN and iron-sulfur (Fe-S) centers, to quinones in the respiratory chain. The immediate electron acceptor for the enzyme in this species is believed to be ubiquinone. Couples the redox reaction to proton translocation (for every two electrons transferred, four hydrogen ions are translocated across the cytoplasmic membrane), and thus conserves the redox energy in a proton gradient. The polypeptide is NADH-quinone oxidoreductase subunit K (Rhodopseudomonas palustris (strain TIE-1)).